A 660-amino-acid chain; its full sequence is MTDRIVPATLVFREDGTVVSPLYGDIYHSAAGALAQADHVFIRGNGLPERWRHERAFTIIETGFGTGCNFLATWAAWRADPSHCERLHFVSVEKHPFAREDLRRAAAHIVAYTTITTITPIAPLVDELANAWPALTPGVHRLEFDDGRVTLTLVFGDALDVLPNLALRAHAFYLDGFAPSKNADLWSPAIFKSLAKLADERATFATYTSSGAVKRALDEAGFAYRKVDGFAGKRAMLVGEFAPRWRVRRHEPPRAFSTDRRDAIVIGAGLAGCAVVERLAARGWHVTLIERRERIASEASGNPAGVFHPMIARDDNLAARLSRAGFLHALHRWRALERAGHAFSRSTHGLVQLATSDDEFERMRESIDALGVPAELASALSRDDARALLRTDVAHGGWLFAQGGSISPATLAAAQCAAAGDRLSRIVGVEIARLERGGDGRWRALDASGATIAQASVVVVANAADAARIAGLRHAPTQRVRGQLTLLPPGSAPAVPLPVIGDGYVVPLANGVTLTGATYEPDDTDATPREAGHRENLERLERLLPAFSANALDAGALAGRVGFRCVASDRLPLVGELGDEAAAAREAAALTGARLRDVPRATGLYGAFGYGSRGLVWAALGAELIAAQIDGEPWPLERELAEAIDPARFLVRALRHGRVA.

The interval 1–242 (MTDRIVPATL…KRAMLVGEFA (242 aa)) is tRNA (mnm(5)s(2)U34)-methyltransferase. The interval 266–660 (IGAGLAGCAV…VRALRHGRVA (395 aa)) is FAD-dependent cmnm(5)s(2)U34 oxidoreductase.

This sequence in the N-terminal section; belongs to the methyltransferase superfamily. tRNA (mnm(5)s(2)U34)-methyltransferase family. The protein in the C-terminal section; belongs to the DAO family. It depends on FAD as a cofactor.

The protein resides in the cytoplasm. It catalyses the reaction 5-aminomethyl-2-thiouridine(34) in tRNA + S-adenosyl-L-methionine = 5-methylaminomethyl-2-thiouridine(34) in tRNA + S-adenosyl-L-homocysteine + H(+). Functionally, catalyzes the last two steps in the biosynthesis of 5-methylaminomethyl-2-thiouridine (mnm(5)s(2)U) at the wobble position (U34) in tRNA. Catalyzes the FAD-dependent demodification of cmnm(5)s(2)U34 to nm(5)s(2)U34, followed by the transfer of a methyl group from S-adenosyl-L-methionine to nm(5)s(2)U34, to form mnm(5)s(2)U34. The sequence is that of tRNA 5-methylaminomethyl-2-thiouridine biosynthesis bifunctional protein MnmC from Burkholderia mallei (strain NCTC 10247).